A 194-amino-acid polypeptide reads, in one-letter code: Large ribosomal subunit protein eL15 (194 aa).

A disordered region spans residues 162-194; sequence LTSAGRKSRGLRNKGKGAEKVRPSVRANKGKTK. Positions 167–176 are enriched in basic residues; sequence RKSRGLRNKG.

The protein belongs to the eukaryotic ribosomal protein eL15 family.

In Thermococcus onnurineus (strain NA1), this protein is Large ribosomal subunit protein eL15.